A 180-amino-acid polypeptide reads, in one-letter code: MASTISAYKEKMKELSVLSLICSCFYTQPHPNTVYQYGDMEVKQLDKRASGQSFEVILKSPSDLSPESPMLSSPPKKKDTSLEELQKRLEAAEERRKTQEAQVLKQLAERREHEREVLHKALEENNNFSRQAEEKLNYKMELSKEIREAHLAALRERLREKELHAAEVRRNKEQREEMSG.

2 S-palmitoyl cysteine lipidation sites follow: Cys22 and Cys24. One can recognise an SLD domain in the interval 38-180 (GDMEVKQLDK…NKEQREEMSG (143 aa)). 7 positions are modified to phosphoserine: Ser50, Ser60, Ser65, Ser68, Ser72, Ser73, and Ser81. The interval 59–82 (KSPSDLSPESPMLSSPPKKKDTSL) is disordered. The segment covering 60 to 74 (SPSDLSPESPMLSSP) has biased composition (low complexity). Residues 75–179 (PKKKDTSLEE…RNKEQREEMS (105 aa)) adopt a coiled-coil conformation.

This sequence belongs to the stathmin family. Interacts with STAT3. Interacts with CLU (secreted form); this interaction may act as an important modulator during neuronal differentiation. N-terminal palmitoylation promotes specific anchoring to the cytosolic leaflet of Golgi membranes and subsequent vesicular trafficking along dendrites and axons. Neuronal Stathmins are substrates for palmitoyltransferases ZDHHC3, ZDHHC7 and ZDHHC15. Neuron specific.

It localises to the golgi apparatus. The protein localises to the cell projection. Its subcellular location is the growth cone. It is found in the axon. The protein resides in the cytoplasm. It localises to the cytosol. In terms of biological role, exhibits microtubule-destabilizing activity, which is antagonized by STAT3. This Homo sapiens (Human) protein is Stathmin-3 (STMN3).